A 209-amino-acid polypeptide reads, in one-letter code: Imidazole glycerol phosphate synthase subunit HisH (209 aa).

Residues 1–205 (MIAIIDYGMG…KGVVETWKSS (205 aa)) enclose the Glutamine amidotransferase type-1 domain. The active-site Nucleophile is cysteine 79. Catalysis depends on residues histidine 180 and glutamate 182.

Heterodimer of HisH and HisF.

It localises to the cytoplasm. It carries out the reaction 5-[(5-phospho-1-deoxy-D-ribulos-1-ylimino)methylamino]-1-(5-phospho-beta-D-ribosyl)imidazole-4-carboxamide + L-glutamine = D-erythro-1-(imidazol-4-yl)glycerol 3-phosphate + 5-amino-1-(5-phospho-beta-D-ribosyl)imidazole-4-carboxamide + L-glutamate + H(+). It catalyses the reaction L-glutamine + H2O = L-glutamate + NH4(+). It participates in amino-acid biosynthesis; L-histidine biosynthesis; L-histidine from 5-phospho-alpha-D-ribose 1-diphosphate: step 5/9. Its function is as follows. IGPS catalyzes the conversion of PRFAR and glutamine to IGP, AICAR and glutamate. The HisH subunit catalyzes the hydrolysis of glutamine to glutamate and ammonia as part of the synthesis of IGP and AICAR. The resulting ammonia molecule is channeled to the active site of HisF. The sequence is that of Imidazole glycerol phosphate synthase subunit HisH from Bacillus cereus (strain AH187).